Here is a 127-residue protein sequence, read N- to C-terminus: Glycine cleavage system H protein (127 aa).

The region spanning 24-105 is the Lipoyl-binding domain; that stretch reads TALVGITDFA…YEDGWMVKVS (82 aa). Residue Lys65 is modified to N6-lipoyllysine.

The protein belongs to the GcvH family. As to quaternary structure, the glycine cleavage system is composed of four proteins: P, T, L and H. The cofactor is (R)-lipoate.

Functionally, the glycine cleavage system catalyzes the degradation of glycine. The H protein shuttles the methylamine group of glycine from the P protein to the T protein. The protein is Glycine cleavage system H protein of Prosthecochloris aestuarii (strain DSM 271 / SK 413).